The sequence spans 97 residues: UPF0298 protein MGAS9429_Spy0329 (97 aa).

This sequence belongs to the UPF0298 family.

It is found in the cytoplasm. The polypeptide is UPF0298 protein MGAS9429_Spy0329 (Streptococcus pyogenes serotype M12 (strain MGAS9429)).